A 936-amino-acid chain; its full sequence is Protein translocase subunit SecA (936 aa).

Residues Gln87, 105–109, and Asp515 contribute to the ATP site; that span reads GEGKT. Zn(2+)-binding residues include Cys920, Cys922, Cys931, and His932.

It belongs to the SecA family. As to quaternary structure, monomer and homodimer. Part of the essential Sec protein translocation apparatus which comprises SecA, SecYEG and auxiliary proteins SecDF-YajC and YidC. The cofactor is Zn(2+).

Its subcellular location is the cell inner membrane. The protein resides in the cytoplasm. The enzyme catalyses ATP + H2O + cellular proteinSide 1 = ADP + phosphate + cellular proteinSide 2.. Part of the Sec protein translocase complex. Interacts with the SecYEG preprotein conducting channel. Has a central role in coupling the hydrolysis of ATP to the transfer of proteins into and across the cell membrane, serving both as a receptor for the preprotein-SecB complex and as an ATP-driven molecular motor driving the stepwise translocation of polypeptide chains across the membrane. This chain is Protein translocase subunit SecA, found in Paraburkholderia phymatum (strain DSM 17167 / CIP 108236 / LMG 21445 / STM815) (Burkholderia phymatum).